The chain runs to 247 residues: GTP cyclohydrolase 1 type 2 homolog (247 aa).

The a divalent metal cation site is built by His63, His64, Asp101, His215, and Glu219.

This sequence belongs to the GTP cyclohydrolase I type 2/NIF3 family. In terms of assembly, homohexamer.

This Buchnera aphidicola subsp. Schizaphis graminum (strain Sg) protein is GTP cyclohydrolase 1 type 2 homolog.